The following is a 571-amino-acid chain: Alpha-1D adrenergic receptor (571 aa).

Topologically, residues 1 to 94 (MTFRDLLSVN…AVGGLVVSAQ (94 aa)) are extracellular. Residues 13–75 (GSRSDGSAGG…SSAGEPGAAG (63 aa)) are disordered. Over residues 19–34 (SAGGASAGGSGGGSGG) the composition is skewed to gly residues. Over residues 35 to 47 (AAASEGRAVDGVP) the composition is skewed to low complexity. Over residues 48–57 (GTAGSGGVVG) the composition is skewed to gly residues. 2 N-linked (GlcNAc...) asparagine glycosylation sites follow: asparagine 64 and asparagine 81. The chain crosses the membrane as a helical span at residues 95-120 (GVGVGVFLAAFILMAVAGNLLVILSV). Topologically, residues 121–132 (ACNRHLQTVTNY) are cytoplasmic. Residues 133–158 (FIVNLAVADLLLSATVLPFSATMEVL) form a helical membrane-spanning segment. Over 159-168 (GFWAFGRAFC) the chain is Extracellular. Residues 169-191 (DVWAAVDVLCCTASILSLCTISV) traverse the membrane as a helical segment. The Cytoplasmic segment spans residues 192 to 212 (DRYVGVRHSLKYPSIMTERKA). Residues 213–237 (AAILALLWAVAIVVSVGPLLGWKEP) traverse the membrane as a helical segment. Residues 238 to 250 (VPPDERFCGITEE) lie on the Extracellular side of the membrane. The chain crosses the membrane as a helical span at residues 251-274 (AGYAVFSSLCSFYLPMAVIVVMYC). The Cytoplasmic segment spans residues 275 to 348 (RVYVVARSTT…KFSREKKAAK (74 aa)). A helical membrane pass occupies residues 349 to 373 (TLAIVVGVFVLCWFPFFFVLPLGSL). At 374–380 (FPQLKPS) the chain is on the extracellular side. The chain crosses the membrane as a helical span at residues 381–405 (EGVFKVIFWLGYFNSCVNPLIYPCS). Residues 406 to 571 (SREFKRAFLR…DYSHLRETDI (166 aa)) lie on the Cytoplasmic side of the membrane. The S-palmitoyl cysteine moiety is linked to residue cysteine 419. The interval 465 to 487 (LPAPEATDTPSAPEAQAPVVGRR) is disordered.

This sequence belongs to the G-protein coupled receptor 1 family. Adrenergic receptor subfamily. ADRA1D sub-subfamily. Interacts with FLNA (via filamin repeat 21); increases PKA-mediated phosphorylation of FLNA. Post-translationally, palmitoylated. Palmitoylation by ZDHHC21 may increase the expression of the receptor and regulate downstream signaling.

The protein resides in the cell membrane. This alpha-adrenergic receptor mediates its effect through the influx of extracellular calcium. This is Alpha-1D adrenergic receptor (ADRA1D) from Sus scrofa (Pig).